A 1872-amino-acid polypeptide reads, in one-letter code: Histone acetyltransferase KAT6B (1872 aa).

An SAMD1-like winged helix (WH) domain is found at 1–77; it reads MVKLANPLYT…LASYKDPDNP (77 aa). Disordered stretches follow at residues 70–103 and 168–207; these read SYKD…CNDL and KEGP…HEKD. The 74-residue stretch at 104–177 folds into the H15 domain; it reads RNVDWNKLLK…KEGPQYRVNS (74 aa). Low complexity predominate over residues 189-202; sequence PSAFPSSLPPVSLL. PHD-type zinc fingers lie at residues 214–273 and 270–321; these read IPIC…CKTC and CKTC…CRPK. Ser-356 is subject to Phosphoserine. The segment at 361–417 is disordered; that stretch reads EGSMSAFTGRGSPGRGQKTKVSTTPSSGHAASGKHSSSRLAVTDPTRPGATTKTTTS. Residues 362–535 form a negatively regulates HAT activity region; the sequence is GSMSAFTGRG…ECESGVEDCG (174 aa). The span at 386–395 shows a compositional bias: low complexity; it reads SSGHAASGKH. A Glycyl lysine isopeptide (Lys-Gly) (interchain with G-Cter in SUMO2) cross-link involves residue Lys-491. In terms of domain architecture, MYST-type HAT spans 533-807; the sequence is DCGRYPSVIE…LDPESLRWTP (275 aa). The segment at 536-826 is catalytic; sequence RYPSVIEFGK…EEEREAEKEA (291 aa). The segment at 566-591 adopts a C2HC MYST-type zinc-finger fold; it reads LYLCEFCLKYMKSKNILLRHSKKCGW. The tract at residues 570 to 826 is interaction with BRPF1; it reads EFCLKYMKSK…EEEREAEKEA (257 aa). Lys-633 is modified (N6-acetyllysine; by autocatalysis). Acetyl-CoA-binding positions include 674–678 and 683–689; these read SCIMI and QRQGFGR. The active-site Proton donor/acceptor is the Glu-709. Position 713 (Ser-713) interacts with acetyl-CoA. The segment covering 846–860 has biased composition (low complexity); that stretch reads SRVSSRQSSAKVQSK. Disordered stretches follow at residues 846-1018, 1031-1252, 1283-1358, and 1388-1418; these read SRVS…NHFF, DAEH…FKDA, MSCN…DDTF, and DECQ…SPSV. 3 positions are modified to N6-acetyllysine: Lys-856, Lys-860, and Lys-862. Ser-866 carries the phosphoserine modification. The span at 887-909 shows a compositional bias: acidic residues; that stretch reads SEEEEEEEEEDDEEEEEEEEEES. Over residues 910-924 the composition is skewed to polar residues; the sequence is IQTSPPRLTKPQSVS. Positions 925-944 are enriched in basic residues; it reads IKRKRPFVVKKKRGRKRRRI. Over residues 946–959 the composition is skewed to low complexity; the sequence is SSVTTETISETTEV. Residues 991–1004 show a composition bias toward basic residues; sequence PVLRKAFPHQPGKK. Basic and acidic residues-rich tracts occupy residues 1031–1047 and 1094–1114; these read DAEH…EPLK and EEQK…REVT. Residues 1155–1176 are compositionally biased toward acidic residues; sequence EEGEEEGEEEGEREEQEEEEEV. The segment covering 1177 to 1207 has biased composition (basic and acidic residues); it reads TTEKDLDGAKSKENPEPEISMEKEDPVHLGD. Residues 1208 to 1217 are compositionally biased toward acidic residues; sequence HEEDEDEEEE. Composition is skewed to basic and acidic residues over residues 1238–1252 and 1310–1320; these read NMER…FKDA and QTQKQDQKNSD. The segment covering 1339–1349 has biased composition (polar residues); that stretch reads ETAQAVQSLTQ. An interaction with RUNX1 and RUNX2 region spans residues 1359 to 1872; it reads PDCAETQEAC…QSLNGSYMRR (514 aa). Residues 1393–1410 are compositionally biased toward low complexity; it reads SDHSSPVSSVHSHPGQSV.

This sequence belongs to the MYST (SAS/MOZ) family. As to quaternary structure, component of the MOZ/MORF complex composed at least of ING5, KAT6A, KAT6B, MEAF6 and one of BRPF1, BRD1/BRPF2 and BRPF3. Interacts with RUNX1 and RUNX2. Autoacetylation at Lys-633 is required for proper function. As to expression, ubiquitously expressed.

It localises to the nucleus. The catalysed reaction is L-lysyl-[protein] + acetyl-CoA = N(6)-acetyl-L-lysyl-[protein] + CoA + H(+). Its function is as follows. Histone acetyltransferase which may be involved in both positive and negative regulation of transcription. Required for RUNX2-dependent transcriptional activation. Component of the MOZ/MORF complex which has a histone H3 acetyltransferase activity. Involved in cerebral cortex development. This chain is Histone acetyltransferase KAT6B (Kat6b), found in Mus musculus (Mouse).